We begin with the raw amino-acid sequence, 466 residues long: tRNA-2-methylthio-N(6)-dimethylallyladenosine synthase (466 aa).

The 117-residue stretch at Lys2 to His118 folds into the MTTase N-terminal domain. Residues Cys11, Cys47, Cys81, Cys157, Cys161, and Cys164 each coordinate [4Fe-4S] cluster. Positions Asp143–Glu372 constitute a Radical SAM core domain. The region spanning Arg375 to Gly453 is the TRAM domain.

The protein belongs to the methylthiotransferase family. MiaB subfamily. As to quaternary structure, monomer. [4Fe-4S] cluster is required as a cofactor.

The protein localises to the cytoplasm. The catalysed reaction is N(6)-dimethylallyladenosine(37) in tRNA + (sulfur carrier)-SH + AH2 + 2 S-adenosyl-L-methionine = 2-methylsulfanyl-N(6)-dimethylallyladenosine(37) in tRNA + (sulfur carrier)-H + 5'-deoxyadenosine + L-methionine + A + S-adenosyl-L-homocysteine + 2 H(+). Functionally, catalyzes the methylthiolation of N6-(dimethylallyl)adenosine (i(6)A), leading to the formation of 2-methylthio-N6-(dimethylallyl)adenosine (ms(2)i(6)A) at position 37 in tRNAs that read codons beginning with uridine. The chain is tRNA-2-methylthio-N(6)-dimethylallyladenosine synthase from Desulfosudis oleivorans (strain DSM 6200 / JCM 39069 / Hxd3) (Desulfococcus oleovorans).